The sequence spans 322 residues: Ferredoxin--NADP reductase (322 aa).

The FAD site is built by aspartate 34, glutamine 42, tyrosine 47, valine 87, phenylalanine 120, aspartate 279, and threonine 320.

Belongs to the ferredoxin--NADP reductase type 2 family. As to quaternary structure, homodimer. It depends on FAD as a cofactor.

It carries out the reaction 2 reduced [2Fe-2S]-[ferredoxin] + NADP(+) + H(+) = 2 oxidized [2Fe-2S]-[ferredoxin] + NADPH. The polypeptide is Ferredoxin--NADP reductase (Streptococcus pneumoniae serotype 2 (strain D39 / NCTC 7466)).